A 326-amino-acid chain; its full sequence is Virulence-associated V antigen (326 aa).

The protein resides in the secreted. In terms of biological role, possibly involved in calcium regulation of YOP expression, which includes the export process. In Yersinia pestis, this protein is Virulence-associated V antigen (lcrV).